A 158-amino-acid polypeptide reads, in one-letter code: UPF0336 protein Mb0654 (158 aa).

Belongs to the UPF0336 family.

This is UPF0336 protein Mb0654 from Mycobacterium bovis (strain ATCC BAA-935 / AF2122/97).